The primary structure comprises 194 residues: Orotate phosphoribosyltransferase (194 aa).

Position 117–125 (117–125 (EDVVTTGLS)) interacts with 5-phospho-alpha-D-ribose 1-diphosphate. The orotate site is built by threonine 121 and arginine 149.

The protein belongs to the purine/pyrimidine phosphoribosyltransferase family. PyrE subfamily. Homodimer. Requires Mg(2+) as cofactor.

The catalysed reaction is orotidine 5'-phosphate + diphosphate = orotate + 5-phospho-alpha-D-ribose 1-diphosphate. It functions in the pathway pyrimidine metabolism; UMP biosynthesis via de novo pathway; UMP from orotate: step 1/2. Catalyzes the transfer of a ribosyl phosphate group from 5-phosphoribose 1-diphosphate to orotate, leading to the formation of orotidine monophosphate (OMP). The chain is Orotate phosphoribosyltransferase from Novosphingobium aromaticivorans (strain ATCC 700278 / DSM 12444 / CCUG 56034 / CIP 105152 / NBRC 16084 / F199).